The primary structure comprises 558 residues: Oxygen-dependent choline dehydrogenase (558 aa).

8-37 (DYIIIGAGSAGNVLATRLTEDSDVSVLLLE) serves as a coordination point for FAD. The active-site Proton acceptor is the His475.

Belongs to the GMC oxidoreductase family. FAD serves as cofactor.

It catalyses the reaction choline + A = betaine aldehyde + AH2. The catalysed reaction is betaine aldehyde + NAD(+) + H2O = glycine betaine + NADH + 2 H(+). The protein operates within amine and polyamine biosynthesis; betaine biosynthesis via choline pathway; betaine aldehyde from choline (cytochrome c reductase route): step 1/1. Involved in the biosynthesis of the osmoprotectant glycine betaine. Catalyzes the oxidation of choline to betaine aldehyde and betaine aldehyde to glycine betaine at the same rate. In Chromohalobacter salexigens (strain ATCC BAA-138 / DSM 3043 / CIP 106854 / NCIMB 13768 / 1H11), this protein is Oxygen-dependent choline dehydrogenase.